A 644-amino-acid chain; its full sequence is MAIKKRYVKRLLRKVVLLLVVIVTVSLVTTLVVERRMKNAAELTEQLDPNGDPITPVFRAANIHPTRKAPRPPFQDRNSVVDIPRSDKLQGFRLPEPKGERKDWHDYAAMEADRKRSGFGEHGVAVKIENPDEKQLEKEHYEMNGFNGLISDRISVNRSVPDLRLEACKTRKYLAKLPNISVIFIFFNEHFNTLLRSIYSVINRTPPELLKQIVLVDDGSEWDVLKQPLDDYVQQHFPHLVTIVRNPERQGLIGARIAGAKVAVGQVMVFFDSHIEVNYNWLPPLIEPIAINPKISTCPMVDTISHEDFSYFSGNKDGARGGFDWKMLYKQLPVLPEDALDKSMPYRSPVMMGGLFAINTDFFWDLGGYDDQLDIWGGEQYELSFKIWMCGGMLLDVPCSRVAHIFRGPMKPRGNPRGHNFVAKNHKRVAEVWMDEYKQYVYKRDPKTYDNLDAGDLTRQRGVRERLKCKSFHWFMTEVAPDFLVKFPPVEPPSYAAGIIQNVANPVYCLDNMGKSTEEAVGMFSCADNRTHPQPNQFWELSIFRDLRMKGFDSVCLDVHEGPPNATVWMWSCHSQGGNQFWYYDRQTQRLVHGENNKRCLEGFVENGIAKVVANSCENGNDRQRWEFGFVNHTMLDTFYDGLK.

Residues 1-13 are Cytoplasmic-facing; it reads MAIKKRYVKRLLR. The helical; Signal-anchor for type II membrane protein transmembrane segment at 14–34 threads the bilayer; that stretch reads KVVLLLVVIVTVSLVTTLVVE. Residues 35–644 are Lumenal-facing; it reads RRMKNAAELT…MLDTFYDGLK (610 aa). 2 N-linked (GlcNAc...) asparagine glycosylation sites follow: N157 and N179. The segment at 177–288 is catalytic subdomain A; it reads LPNISVIFIF…YNWLPPLIEP (112 aa). The substrate site is built by D218 and R249. Residue D272 coordinates Mn(2+). Residue S273 coordinates substrate. H274 is a binding site for Mn(2+). The tract at residues 345 to 407 is catalytic subdomain B; it reads PYRSPVMMGG…PCSRVAHIFR (63 aa). W376 lines the substrate pocket. H404 lines the Mn(2+) pocket. R407 contacts substrate. The region spanning 496–629 is the Ricin B-type lectin domain; the sequence is AAGIIQNVAN…GNDRQRWEFG (134 aa). A disulfide bridge connects residues C509 and C526. 2 N-linked (GlcNAc...) asparagine glycosylation sites follow: N529 and N565. 2 disulfides stabilise this stretch: C556/C573 and C600/C617. N632 is a glycosylation site (N-linked (GlcNAc...) asparagine).

Belongs to the glycosyltransferase 2 family. GalNAc-T subfamily. It depends on Mn(2+) as a cofactor. In terms of tissue distribution, expressed in developing oocytes and egg chambers. During embryonic stages 9-11, expressed in the primordium of the foregut, midgut and hindgut. During embryonic stages 12-13, shows specific expression in the proventriculus that continues until the end of embryogenesis. In third instar larvae, ubiquitously expressed in wing, eye-antennal, leg and haltere imaginal disks.

Its subcellular location is the golgi apparatus membrane. The enzyme catalyses L-seryl-[protein] + UDP-N-acetyl-alpha-D-galactosamine = a 3-O-[N-acetyl-alpha-D-galactosaminyl]-L-seryl-[protein] + UDP + H(+). It carries out the reaction L-threonyl-[protein] + UDP-N-acetyl-alpha-D-galactosamine = a 3-O-[N-acetyl-alpha-D-galactosaminyl]-L-threonyl-[protein] + UDP + H(+). It functions in the pathway protein modification; protein glycosylation. Glycopeptide transferase involved in O-linked oligosaccharide biosynthesis, which catalyzes the transfer of an N-acetyl-D-galactosamine residue to an already glycosylated peptide. In contrast to other proteins of the family, it does not act as a peptide transferase that transfers GalNAc onto serine or threonine residue on the protein receptor, but instead requires the prior addition of a GalNAc on a peptide before adding additional GalNAc moieties. Some peptide transferase activity is however not excluded, considering that its appropriate peptide substrate may remain unidentified. Prefers the diglycosylated Muc5AC-3/13 as substrate. This chain is N-acetylgalactosaminyltransferase 4, found in Drosophila melanogaster (Fruit fly).